The following is a 138-amino-acid chain: uncharacterized protein (138 aa).

The next 2 helical transmembrane spans lie at 1-21 (MEIG…EAIV) and 46-66 (YAFI…HKFV).

The protein resides in the cell membrane. This is an uncharacterized protein from Methanocaldococcus jannaschii (strain ATCC 43067 / DSM 2661 / JAL-1 / JCM 10045 / NBRC 100440) (Methanococcus jannaschii).